Here is a 275-residue protein sequence, read N- to C-terminus: Large ribosomal subunit protein uL2 (275 aa).

Positions 221 to 275 (RGTAMNPIDHPHGGGEGKNFGKHPVSPWGVQSKGKKTRKNKRTEKYILYNRKYKK) are disordered. The span at 253–262 (KGKKTRKNKR) shows a compositional bias: basic residues.

It belongs to the universal ribosomal protein uL2 family. In terms of assembly, part of the 50S ribosomal subunit. Forms a bridge to the 30S subunit in the 70S ribosome.

In terms of biological role, one of the primary rRNA binding proteins. Required for association of the 30S and 50S subunits to form the 70S ribosome, for tRNA binding and peptide bond formation. It has been suggested to have peptidyltransferase activity; this is somewhat controversial. Makes several contacts with the 16S rRNA in the 70S ribosome. In Wigglesworthia glossinidia brevipalpis, this protein is Large ribosomal subunit protein uL2.